Here is a 188-residue protein sequence, read N- to C-terminus: Oleosin S2-2 (188 aa).

A2 bears the N-acetylalanine mark. Residues 2 to 51 (ATVERRVQVDPTDKRIHLQPQYEGDVGYGYGYGGRADYKSSGPSSNQIVA) form a polar region. A run of 3 helical transmembrane segments spans residues 49-69 (IVAL…AGLT), 74-94 (VIGL…IVPA), and 96-116 (ITIG…LTGL). Residues 52-125 (LIVGVPVGGS…LSSVSWVLNY (74 aa)) are hydrophobic. Positions 164–188 (DKAHEAHDTSLTTETTEPGKTRRHT) are disordered. The span at 172–181 (TSLTTETTEP) shows a compositional bias: polar residues.

This sequence belongs to the oleosin family.

Its subcellular location is the lipid droplet. The protein localises to the membrane. In terms of biological role, may have a structural role to stabilize the lipid body during desiccation of the seed by preventing coalescence of the oil. Probably interacts with both lipid and phospholipid moieties of lipid bodies. May also provide recognition signals for specific lipase anchorage in lipolysis during seedling growth. This Brassica napus (Rape) protein is Oleosin S2-2 (S2).